The chain runs to 441 residues: ATP-dependent RNA helicase sub2 (441 aa).

Low complexity predominate over residues 23-32 (TTAAPAANGD). The disordered stretch occupies residues 23–42 (TTAAPAANGDAAKKGDLTVS). The short motif at 58 to 86 (TGFRDFLLKGELLRAITDCGFEHPSEVQQ) is the Q motif element. Residues 89-264 (IPTAILNVDV…KKFMRNPLEV (176 aa)) form the Helicase ATP-binding domain. 102–109 (AKSGLGKT) contacts ATP. Residues 211-214 (DECD) carry the DECD box motif. Residues 292–437 (KLNELLDSLE…EYPEGGVDSS (146 aa)) enclose the Helicase C-terminal domain.

Belongs to the DEAD box helicase family. DECD subfamily.

It localises to the nucleus. It carries out the reaction ATP + H2O = ADP + phosphate + H(+). ATP-binding RNA helicase involved in transcription elongation and required for the export of mRNA out of the nucleus. SUB2 also plays a role in pre-mRNA splicing and spliceosome assembly. May be involved in rDNA and telomeric silencing, and maintenance of genome integrity. In Aspergillus oryzae (strain ATCC 42149 / RIB 40) (Yellow koji mold), this protein is ATP-dependent RNA helicase sub2 (sub2).